A 207-amino-acid polypeptide reads, in one-letter code: MAKTYDYLFKLLLIGDSGVGKTCLLFRFSEDAFNTTFISTIGIDFKIRTIELDGKKIKLQIWDTAGQERFRTITTAYYRGAMGIMLVYDITNEKSFDNIKNWIRNIEEHASSDVERMILGNKCDMNDKRQVSKERGEKLAIDYGIKFLETSAKSSTNVEEAFFTLARDIMTKLNRKMNDSNSAGAGGPVKITENRSKKTSFFRCLLL.

GTP contacts are provided by Ser17, Gly18, Val19, Gly20, Lys21, Thr22, Cys23, Thr35, Ser39, and Thr40. Thr22 is a binding site for Mg(2+). Short sequence motifs (switch) lie at residues 31-45 and 63-80; these read DAFN…GIDF and DTAG…YYRG. Mg(2+) contacts are provided by Thr40 and Asp63. Residue Gly66 participates in GTP binding. Thr72 carries the post-translational modification Phosphothreonine. Residues Asn121, Lys122, Asp124, Ala152, and Lys153 each coordinate GTP. The residue at position 180 (Ser180) is a Phosphoserine. Cys204 bears the Cysteine methyl ester mark. Cys204 carries S-geranylgeranyl cysteine lipidation. Positions 205-207 are cleaved as a propeptide — removed in mature form; it reads LLL.

It belongs to the small GTPase superfamily. Rab family. Associated with actin, delta-catenin and alpha and beta tubulins. Interacts with OTOF. Interacts with PEX5R. Interacts with RAB3IP. Interacts with VIM. Interacts with CDH1. Interacts with MICALL2. Interacts with GDI1, GDI2, CHML and CHM; phosphorylation at Thr-72 disrupts these interactions. Interacts with MICAL1. It depends on Mg(2+) as a cofactor. In terms of processing, phosphorylation of Thr-72 in the switch II region by LRRK2 prevents the association of RAB regulatory proteins, including CHM, CHML and RAB GDP dissociation inhibitors GDI1 and GDI2.

Its subcellular location is the cell membrane. It localises to the cytoplasmic vesicle. It is found in the phagosome membrane. The protein localises to the endosome membrane. It carries out the reaction GTP + H2O = GDP + phosphate + H(+). With respect to regulation, regulated by guanine nucleotide exchange factors (GEFs) including RAB3IP/RABIN8 which promotes the exchange of bound GDP for free GTP. Regulated by GTPase activating proteins (GAPs) which increase the GTP hydrolysis activity. Inhibited by GDP dissociation inhibitors (GDIs). The small GTPases Rab are key regulators of intracellular membrane trafficking, from the formation of transport vesicles to their fusion with membranes. Rabs cycle between an inactive GDP-bound form and an active GTP-bound form that is able to recruit to membranes different sets of downstream effectors directly responsible for vesicle formation, movement, tethering and fusion. RAB8B may be involved in polarized vesicular trafficking and neurotransmitter release. May participate in cell junction dynamics in Sertoli cells. May also participate in the export of a subset of neosynthesized proteins through a Rab8-Rab10-Rab11-dependent endososomal export route. The sequence is that of Ras-related protein Rab-8B (RAB8B) from Pongo abelii (Sumatran orangutan).